The following is a 692-amino-acid chain: Formate hydrogenlyase transcriptional activator (692 aa).

A GAF domain is found at 202-344 (DIDELVSEVA…QIAERVAIAV (143 aa)). Residues 381–610 (IIGRSEAMYN…LENVVERAVL (230 aa)) enclose the Sigma-54 factor interaction domain. ATP-binding positions include 409–416 (GETGTGKE) and 472–481 (ADKSSLFLDE). The H-T-H motif DNA-binding region spans 663-682 (PKGAAQRLGLKRTTLLSRMK).

Its function is as follows. Required for induction of expression of the formate dehydrogenase H and hydrogenase-3 structural genes. This Salmonella typhimurium (strain SL1344) protein is Formate hydrogenlyase transcriptional activator (fhlA).